The chain runs to 238 residues: Probable 2-phosphosulfolactate phosphatase (238 aa).

Belongs to the ComB family. Mg(2+) is required as a cofactor.

The enzyme catalyses (2R)-O-phospho-3-sulfolactate + H2O = (2R)-3-sulfolactate + phosphate. This is Probable 2-phosphosulfolactate phosphatase from Carboxydothermus hydrogenoformans (strain ATCC BAA-161 / DSM 6008 / Z-2901).